The following is a 185-amino-acid chain: Coordinator of PRMT5 and differentiation stimulator (185 aa).

Met-1 carries the post-translational modification N-acetylmethionine. Positions 1–109 are disordered; the sequence is MDPPTAGAQS…MSGCLPKEQA (109 aa). Composition is skewed to basic and acidic residues over residues 42–52 and 66–77; these read SSQEKATENAT and SPAHGEGTHCEE. Ser-66 is modified (phosphoserine). Positions 78 to 89 are enriched in acidic residues; it reads EGFAEDDEDSDG.

Interacts with PRMT5. Interacts with histone H4; specifically interacts with the N-terminus of histone H4 but not with histone H3. Interacts with CBFB. Found in a complex with PRMT5, RUNX1 and CBFB.

The protein localises to the nucleus. Its function is as follows. Histone-binding protein required for histone H4 methyltransferase activity of PRMT5. Specifically required for histone H4 'Arg-3' methylation mediated by PRMT5, but not histone H3 'Arg-8' methylation, suggesting that it modulates the substrate specificity of PRMT5. Specifically interacts with the N-terminus of histone H4 but not with histone H3, suggesting that it acts by promoting the association between histone H4 and PRMT5. Involved in CCNE1 promoter repression. Plays a role in muscle cell differentiation by modulating the recruitment of PRMT5 to the promoter of genes involved in the coordination between cell cycle exit and muscle differentiation. This chain is Coordinator of PRMT5 and differentiation stimulator (COPRS), found in Bos taurus (Bovine).